Consider the following 373-residue polypeptide: ATP phosphoribosyltransferase regulatory subunit (373 aa).

It belongs to the class-II aminoacyl-tRNA synthetase family. HisZ subfamily. In terms of assembly, heteromultimer composed of HisG and HisZ subunits.

Its subcellular location is the cytoplasm. It functions in the pathway amino-acid biosynthesis; L-histidine biosynthesis; L-histidine from 5-phospho-alpha-D-ribose 1-diphosphate: step 1/9. Its function is as follows. Required for the first step of histidine biosynthesis. May allow the feedback regulation of ATP phosphoribosyltransferase activity by histidine. In Chelativorans sp. (strain BNC1), this protein is ATP phosphoribosyltransferase regulatory subunit.